The sequence spans 289 residues: Ribosomal RNA small subunit methyltransferase A (289 aa).

Residues N28, L30, G55, E77, D103, and N122 each coordinate S-adenosyl-L-methionine.

This sequence belongs to the class I-like SAM-binding methyltransferase superfamily. rRNA adenine N(6)-methyltransferase family. RsmA subfamily.

Its subcellular location is the cytoplasm. The enzyme catalyses adenosine(1518)/adenosine(1519) in 16S rRNA + 4 S-adenosyl-L-methionine = N(6)-dimethyladenosine(1518)/N(6)-dimethyladenosine(1519) in 16S rRNA + 4 S-adenosyl-L-homocysteine + 4 H(+). Functionally, specifically dimethylates two adjacent adenosines (A1518 and A1519) in the loop of a conserved hairpin near the 3'-end of 16S rRNA in the 30S particle. May play a critical role in biogenesis of 30S subunits. The polypeptide is Ribosomal RNA small subunit methyltransferase A (Jannaschia sp. (strain CCS1)).